The primary structure comprises 505 residues: Histidine ammonia-lyase (505 aa).

A cross-link (5-imidazolinone (Ala-Gly)) is located at residues 141–143 (ASG). Ser-142 carries the post-translational modification 2,3-didehydroalanine (Ser).

The protein belongs to the PAL/histidase family. In terms of processing, contains an active site 4-methylidene-imidazol-5-one (MIO), which is formed autocatalytically by cyclization and dehydration of residues Ala-Ser-Gly.

The protein resides in the cytoplasm. It carries out the reaction L-histidine = trans-urocanate + NH4(+). Its pathway is amino-acid degradation; L-histidine degradation into L-glutamate; N-formimidoyl-L-glutamate from L-histidine: step 1/3. The protein is Histidine ammonia-lyase of Bacillus mycoides (strain KBAB4) (Bacillus weihenstephanensis).